The primary structure comprises 688 residues: ATP-dependent zinc metalloprotease FTSH 6, chloroplastic (688 aa).

A chloroplast-targeting transit peptide spans 1–75 (MKMASSSSAL…GFTSALGTVL (75 aa)). The span at 25 to 36 (QQFQKPASLSKS) shows a compositional bias: polar residues. Residues 25–44 (QQFQKPASLSKSSHTHKPSL) are disordered. The transit peptide at 76–83 (AHPAKAEP) directs the protein to the thylakoid. The Lumenal, thylakoid segment spans residues 84–168 (EAPIEATSNR…AHPMNVNWGA (85 aa)). The chain crosses the membrane as a helical span at residues 169–189 (FLLNFLGNLGFPLILLVSLLL). Residues 190–688 (TSSSRRNPAG…RIRINDLISV (499 aa)) lie on the Stromal side of the membrane. Position 264 to 271 (264 to 271 (GPPGTGKT)) interacts with ATP. His485 provides a ligand contact to Zn(2+). The active site involves Glu486. Zn(2+) is bound by residues His489 and Asp563.

The protein in the N-terminal section; belongs to the AAA ATPase family. It in the C-terminal section; belongs to the peptidase M41 family. It depends on Zn(2+) as a cofactor.

The protein localises to the plastid. Its subcellular location is the chloroplast thylakoid membrane. Its function is as follows. Probable ATP-dependent zinc metallopeptidase. Involved in the degradation of the light-harvesting complex of photosystem II (LHC II) during senescence or high light acclimation. This chain is ATP-dependent zinc metalloprotease FTSH 6, chloroplastic (FTSH6), found in Arabidopsis thaliana (Mouse-ear cress).